The sequence spans 230 residues: 5'-methylthioadenosine/S-adenosylhomocysteine nucleosidase (230 aa).

The Proton acceptor role is filled by E12. Substrate is bound by residues G78, I152, and M173 to E174. Catalysis depends on D197, which acts as the Proton donor.

Belongs to the PNP/UDP phosphorylase family. MtnN subfamily.

It carries out the reaction S-adenosyl-L-homocysteine + H2O = S-(5-deoxy-D-ribos-5-yl)-L-homocysteine + adenine. It catalyses the reaction S-methyl-5'-thioadenosine + H2O = 5-(methylsulfanyl)-D-ribose + adenine. The enzyme catalyses 5'-deoxyadenosine + H2O = 5-deoxy-D-ribose + adenine. It participates in amino-acid biosynthesis; L-methionine biosynthesis via salvage pathway; S-methyl-5-thio-alpha-D-ribose 1-phosphate from S-methyl-5'-thioadenosine (hydrolase route): step 1/2. In terms of biological role, catalyzes the irreversible cleavage of the glycosidic bond in both 5'-methylthioadenosine (MTA) and S-adenosylhomocysteine (SAH/AdoHcy) to adenine and the corresponding thioribose, 5'-methylthioribose and S-ribosylhomocysteine, respectively. Also cleaves 5'-deoxyadenosine, a toxic by-product of radical S-adenosylmethionine (SAM) enzymes, into 5-deoxyribose and adenine. This is 5'-methylthioadenosine/S-adenosylhomocysteine nucleosidase from Haemophilus influenzae (strain 86-028NP).